A 358-amino-acid polypeptide reads, in one-letter code: Peptide chain release factor 1 (358 aa).

At Q233 the chain carries N5-methylglutamine.

Belongs to the prokaryotic/mitochondrial release factor family. Post-translationally, methylated by PrmC. Methylation increases the termination efficiency of RF1.

Its subcellular location is the cytoplasm. Functionally, peptide chain release factor 1 directs the termination of translation in response to the peptide chain termination codons UAG and UAA. The polypeptide is Peptide chain release factor 1 (Lysinibacillus sphaericus (strain C3-41)).